Consider the following 214-residue polypeptide: C-type lectin domain family 2 member L (214 aa).

The segment at 1-56 is disordered; it reads MEPAREPPSRARPPPPLAARPAPAPAAPRPRSPAEAEARGPEGLLRRSGSGYEGST. Residues 10-31 are compositionally biased toward pro residues; sequence RARPPPPLAARPAPAPAAPRPR. Serine 32 bears the Phosphoserine mark. The chain crosses the membrane as a helical span at residues 69 to 89; the sequence is LLLGAIAVLLFAILVVMSILA. The C-type lectin domain maps to 107–209; sequence YGRKCYFFSE…CLMTRPWVCS (103 aa). 2 disulfides stabilise this stretch: cysteine 128–cysteine 208 and cysteine 187–cysteine 200.

The protein resides in the membrane. The chain is C-type lectin domain family 2 member L (CLEC2L) from Homo sapiens (Human).